A 901-amino-acid polypeptide reads, in one-letter code: Dipeptidyl-aminopeptidase B (901 aa).

Residues 1-22 (MSSPRPSTSSTSSDSGLSVDTT) show a composition bias toward low complexity. Residues 1–67 (MSSPRPSTSS…EPFLPSAKKQ (67 aa)) form a disordered region. Topologically, residues 1 to 76 (MSSPRPSTSS…QAASGSRTSR (76 aa)) are cytoplasmic. Residues 77-97 (LIWGLVILCVAGWLWGLVLFV) form a helical; Signal-anchor for type II membrane protein membrane-spanning segment. At 98–901 (TQNRSAQQSV…VKRSLPMLVN (804 aa)) the chain is on the vacuolar side. N334 and N625 each carry an N-linked (GlcNAc...) asparagine glycan. Residue S739 is the Charge relay system of the active site. An N-linked (GlcNAc...) asparagine glycan is attached at N793. Catalysis depends on charge relay system residues D816 and H849.

Belongs to the peptidase S9B family.

Its subcellular location is the vacuole membrane. The enzyme catalyses Release of an N-terminal dipeptide, Xaa-Yaa-|-Zaa-, from a polypeptide, preferentially when Yaa is Pro, provided Zaa is neither Pro nor hydroxyproline.. Functionally, type IV dipeptidyl-peptidase which removes N-terminal dipeptides sequentially from polypeptides having unsubstituted N-termini provided that the penultimate residue is proline. This Aspergillus niger protein is Dipeptidyl-aminopeptidase B (dapB).